The following is a 304-amino-acid chain: Homoserine kinase (304 aa).

90-100 (PLARGLGSSAS) is an ATP binding site.

The protein belongs to the GHMP kinase family. Homoserine kinase subfamily.

The protein resides in the cytoplasm. It catalyses the reaction L-homoserine + ATP = O-phospho-L-homoserine + ADP + H(+). It functions in the pathway amino-acid biosynthesis; L-threonine biosynthesis; L-threonine from L-aspartate: step 4/5. Catalyzes the ATP-dependent phosphorylation of L-homoserine to L-homoserine phosphate. The polypeptide is Homoserine kinase (Staphylococcus aureus (strain bovine RF122 / ET3-1)).